A 420-amino-acid polypeptide reads, in one-letter code: Putative RNA-binding protein Alsin2 (420 aa).

Residues isoleucine 99 to alanine 130 are a coiled coil. 3 stretches are compositionally biased toward basic and acidic residues: residues alanine 242–glycine 259, arginine 282–aspartate 363, and histidine 373–aspartate 399. The interval alanine 242 to arginine 420 is disordered.

The protein belongs to the Luc7 family. In terms of assembly, interacts with x16 (via Arg/Ser-rich region).

Its function is as follows. May bind to RNA via its Arg/Ser-rich domain. The sequence is that of Putative RNA-binding protein Alsin2 from Drosophila melanogaster (Fruit fly).